Here is a 753-residue protein sequence, read N- to C-terminus: Centromere protein I (753 aa).

Positions 1–15 (MQRRQSSKHSKRPLQ) are enriched in basic residues. The disordered stretch occupies residues 1–54 (MQRRQSSKHSKRPLQVHHSNQTDLSAWRKGGTVDTEKSAQNRQSLSDQKNDNEQ).

This sequence belongs to the CENP-I/CTF3 family. Component of the CENPA-HI complex, at least composed of CENPH, CENPI, CENPK, CENPL, CENPM, CENPO and CENPP.

The protein localises to the nucleus. It is found in the chromosome. It localises to the centromere. Its function is as follows. Component of the CENPA-HI complex, a centromeric complex involved in assembly of kinetochore proteins, mitotic progression and chromosome segregation. Required for the localization of CENPC but not CENPA to the centromere. It however may be involved in incorporation of newly synthesized CENPA into centromeres via its interaction with the CENPA-NAC complex. This Gallus gallus (Chicken) protein is Centromere protein I (CENPI).